The sequence spans 193 residues: Fra a 1-associated protein (193 aa).

A disordered region spans residues 1-27 (MGWVWKDDDEQGGHVNPSAADISPRLD).

Interacts with FRAA1E, FRAA2 and FRAA3.

In Fragaria ananassa (Strawberry), this protein is Fra a 1-associated protein.